A 1479-amino-acid chain; its full sequence is WASH complex subunit 2 (1479 aa).

Over residues 1–17 (MPEEQPQQQQQPVREQP) the composition is skewed to low complexity. Disordered stretches follow at residues 1–25 (MPEE…DVPW), 188–210 (GGLV…TEKK), 240–564 (FIED…GGVK), 576–1383 (FSGK…FDDI), and 1419–1479 (TSTT…NLFD). Over residues 242–279 (EDSDSDSSDEEDEEDVDAEDGSDESSSESSSDDDDEKD) the composition is skewed to acidic residues. Residues 334 to 349 (SKKSSNSYTSSLSDIL) show a composition bias toward low complexity. Residues 422–431 (DDDLFGDSEE) show a composition bias toward acidic residues. Low complexity-rich tracts occupy residues 465 to 475 (TTTSSQPQQKK) and 514 to 532 (TPKP…TTTK). Thr535 bears the Phosphothreonine mark. The segment covering 542-552 (ASGSESTTGKS) has biased composition (polar residues). Basic and acidic residues predominate over residues 595–620 (TESKASEDDFFSSDKKSTSATKKDAE). Low complexity predominate over residues 709–723 (PKAPTTATTTTTTKP). Positions 765 to 781 (TETKKQPITEEPKKKQD) are enriched in basic and acidic residues. Over residues 802–814 (ASISPASPVSTIE) the composition is skewed to polar residues. Over residues 839-885 (DLTKDEPAKSEPTKVEPTKVEPTKAEPTKVEPAKVEPTKVESDKKES) the composition is skewed to basic and acidic residues. The span at 904-916 (KNPTTSSSTTATE) shows a compositional bias: polar residues. The span at 951–968 (SSTTKKSTTTTTTTTSSK) shows a compositional bias: low complexity. Residues 981–990 (KKVEEKKSSD) are compositionally biased toward basic and acidic residues. Composition is skewed to low complexity over residues 991–1000 (FDSFFSGSDD) and 1010–1021 (KTTTTPPLTSTT). The segment covering 1062–1075 (PLTSNNTKNRTKSI) has biased composition (polar residues). Residues 1091 to 1107 (EKNRSESPTSEKAEPTK) are compositionally biased toward basic and acidic residues. The segment covering 1108–1123 (KTSNISSLQNKLSLNP) has biased composition (polar residues). Residues 1147-1162 (STNNDNDSSATDLSDS) show a composition bias toward low complexity. 2 stretches are compositionally biased toward polar residues: residues 1163-1174 (GRSSPSVTSPTL) and 1220-1236 (KSGT…TPTQ). Phosphoserine is present on Ser1249. Low complexity predominate over residues 1277–1292 (EKTSSGKSSPSPTIKS). Positions 1307 to 1317 (ASTTTKPTASE) are enriched in polar residues. The span at 1327 to 1358 (KKSEPETPKETPKETPKEKEQTKEKEQPKETP) shows a compositional bias: basic and acidic residues. Low complexity-rich tracts occupy residues 1419 to 1445 (TSTT…AVDN) and 1452 to 1466 (NTTT…TPSK).

It belongs to the FAM21 family. As to quaternary structure, probable component of the WASH complex.

The chain is WASH complex subunit 2 from Dictyostelium discoideum (Social amoeba).